Reading from the N-terminus, the 421-residue chain is Serine hydroxymethyltransferase (421 aa).

(6S)-5,6,7,8-tetrahydrofolate-binding positions include Leu121 and 125–127 (GHL). Lys230 is subject to N6-(pyridoxal phosphate)lysine.

It belongs to the SHMT family. Homodimer. Pyridoxal 5'-phosphate is required as a cofactor.

The protein resides in the cytoplasm. The enzyme catalyses (6R)-5,10-methylene-5,6,7,8-tetrahydrofolate + glycine + H2O = (6S)-5,6,7,8-tetrahydrofolate + L-serine. It functions in the pathway one-carbon metabolism; tetrahydrofolate interconversion. It participates in amino-acid biosynthesis; glycine biosynthesis; glycine from L-serine: step 1/1. Functionally, catalyzes the reversible interconversion of serine and glycine with tetrahydrofolate (THF) serving as the one-carbon carrier. This reaction serves as the major source of one-carbon groups required for the biosynthesis of purines, thymidylate, methionine, and other important biomolecules. Also exhibits THF-independent aldolase activity toward beta-hydroxyamino acids, producing glycine and aldehydes, via a retro-aldol mechanism. This Carboxydothermus hydrogenoformans (strain ATCC BAA-161 / DSM 6008 / Z-2901) protein is Serine hydroxymethyltransferase.